We begin with the raw amino-acid sequence, 446 residues long: Phosphoglucosamine mutase (446 aa).

Serine 101 functions as the Phosphoserine intermediate in the catalytic mechanism. Mg(2+)-binding residues include serine 101, aspartate 240, aspartate 242, and aspartate 244. Serine 101 is subject to Phosphoserine.

The protein belongs to the phosphohexose mutase family. The cofactor is Mg(2+). Post-translationally, activated by phosphorylation.

The catalysed reaction is alpha-D-glucosamine 1-phosphate = D-glucosamine 6-phosphate. Catalyzes the conversion of glucosamine-6-phosphate to glucosamine-1-phosphate. The sequence is that of Phosphoglucosamine mutase from Coxiella burnetii (strain Dugway 5J108-111).